A 399-amino-acid chain; its full sequence is Octopine dehydrogenase (399 aa).

NADH-binding positions include 10–13 and 35–38; these read GGNG and FADE. Pyruvate-binding residues include Gln118 and Thr143. Gln118 serves as a coordination point for substrate. Cys148 contacts NAD(+). Met206 contacts L-arginine. His212 serves as a coordination point for pyruvate. The active site involves His212. Arg324 lines the NAD(+) pocket.

Belongs to the lysopine/nopaline/octopine/opine/vitopine dehydrogenases family.

The catalysed reaction is D-octopine + NAD(+) + H2O = L-arginine + pyruvate + NADH + H(+). Its activity is regulated as follows. Agmatine acts as a competitive inhibitor of the condensation reaction where the L-arginine and agmatine substrates compete for the same site. Functionally, catalyzes the reverse reaction of octopine dehydrogenation. Acts on L-arginine in preference to other substrates such as canavanine, cysteine, L-alanine, ornithine or norvaline, owing to the presence of the positively charged guanidium group. This is Octopine dehydrogenase from Pecten maximus (King scallop).